Reading from the N-terminus, the 438-residue chain is GTPase Obg (438 aa).

Positions 6–164 (AEFVDRVKIF…RWLELELKIL (159 aa)) constitute an Obg domain. Positions 165 to 335 (ADVGLVGYPN…LLDRVASIVR (171 aa)) constitute an OBG-type G domain. GTP contacts are provided by residues 171 to 178 (GYPNVGKS), 196 to 200 (FTTLV), 217 to 220 (DIPG), 287 to 290 (NKID), and 316 to 318 (SAV). Positions 178 and 198 each coordinate Mg(2+). In terms of domain architecture, OCT spans 358–438 (VWRKLPERFE…IGNFEFEYRE (81 aa)).

It belongs to the TRAFAC class OBG-HflX-like GTPase superfamily. OBG GTPase family. As to quaternary structure, monomer. It depends on Mg(2+) as a cofactor.

Its subcellular location is the cytoplasm. Functionally, an essential GTPase which binds GTP, GDP and possibly (p)ppGpp with moderate affinity, with high nucleotide exchange rates and a fairly low GTP hydrolysis rate. Plays a role in control of the cell cycle, stress response, ribosome biogenesis and in those bacteria that undergo differentiation, in morphogenesis control. In Thermotoga neapolitana (strain ATCC 49049 / DSM 4359 / NBRC 107923 / NS-E), this protein is GTPase Obg.